A 333-amino-acid polypeptide reads, in one-letter code: Photosystem II assembly lipoprotein Ycf48 (333 aa).

The first 23 residues, 1-23, serve as a signal peptide directing secretion; it reads MKRLLNSATQLLLVLVLGISLSG. Cys-24 carries N-palmitoyl cysteine lipidation. Cys-24 carries the S-diacylglycerol cysteine lipid modification.

It belongs to the Ycf48 family. Part of early PSII assembly complexes which includes D1 (psbA) and PsbI; not found in mature PSII. Binds to the lumenal side of PSII complexes. Interacts with YidC.

Its subcellular location is the cellular thylakoid membrane. In terms of biological role, a factor required for optimal assembly of photosystem II (PSII), acting in the early stages of PSII assembly. Also plays a role in replacement of photodamaged D1 (psbA). Assists YidC in synthesis of chlorophyll-binding proteins. The protein is Photosystem II assembly lipoprotein Ycf48 of Synechococcus sp. (strain CC9605).